Consider the following 698-residue polypeptide: Polyphosphate kinase (698 aa).

ATP is bound at residue N63. R390 and R420 together coordinate Mg(2+). H450 acts as the Phosphohistidine intermediate in catalysis. ATP is bound by residues Y483, R579, and H607.

Belongs to the polyphosphate kinase 1 (PPK1) family. Mg(2+) is required as a cofactor. In terms of processing, an intermediate of this reaction is the autophosphorylated ppk in which a phosphate is covalently linked to a histidine residue through a N-P bond.

The catalysed reaction is [phosphate](n) + ATP = [phosphate](n+1) + ADP. Catalyzes the reversible transfer of the terminal phosphate of ATP to form a long-chain polyphosphate (polyP). This chain is Polyphosphate kinase, found in Xylella fastidiosa (strain 9a5c).